Reading from the N-terminus, the 153-residue chain is Regulatory protein RecX (153 aa).

It belongs to the RecX family.

The protein resides in the cytoplasm. In terms of biological role, modulates RecA activity. The polypeptide is Regulatory protein RecX (Neisseria gonorrhoeae (strain ATCC 700825 / FA 1090)).